Consider the following 296-residue polypeptide: Cell division protein DivIB (296 aa).

At 1–29 (MTKEIPKINNEYLKEKRKKQRIQQRRVQR) the chain is on the cytoplasmic side. Residues 30-50 (MIVGILVVIVLLILVYMFTPI) form a helical membrane-spanning segment. The POTRA domain occupies 51-119 (SHIKSADIKG…NPIEVNVKEH (69 aa)). Residues 51 to 296 (SHIKSADIKG…NKIKDEESSE (246 aa)) are Extracellular-facing. Polar residues predominate over residues 256–273 (NNGQTSSASAKEVQSGTA). The disordered stretch occupies residues 256 to 296 (NNGQTSSASAKEVQSGTASEDKAKDDLQKALNKIKDEESSE). The span at 274–296 (SEDKAKDDLQKALNKIKDEESSE) shows a compositional bias: basic and acidic residues.

The protein belongs to the FtsQ/DivIB family. DivIB subfamily.

The protein resides in the cell membrane. Functionally, cell division protein that may be involved in stabilizing or promoting the assembly of the division complex. This chain is Cell division protein DivIB, found in Staphylococcus pseudintermedius (strain HKU10-03).